A 538-amino-acid chain; its full sequence is Frizzled-4 (538 aa).

The signal sequence occupies residues 1 to 37 (MAWQGTGPSVRGMPGGVRLRLGLLLLQLLLLQRPALG). Topologically, residues 38–213 (FGDEEERRCD…KCGYDAGLYS (176 aa)) are extracellular. One can recognise an FZ domain in the interval 41–162 (EEERRCDPIR…NDHNHMCMEG (122 aa)). 8 disulfides stabilise this stretch: Cys46/Cys107, Cys54/Cys100, Cys91/Cys129, Cys118/Cys159, Cys122/Cys146, Cys182/Cys201, Cys205/Cys283, and Cys303/Cys378. A glycan (N-linked (GlcNAc...) asparagine) is linked at Asn60. The N-linked (GlcNAc...) asparagine glycan is linked to Asn145. Residues 214–244 (RSAKEFTDIWMAVWASLCFISTTFTVLTFLI) form a helical membrane-spanning segment. Over 245–250 (DSSRFS) the chain is Cytoplasmic. The chain crosses the membrane as a helical span at residues 251 to 276 (YPERPIIFLSMCYNIYSIAYIVRLTV). At 277-300 (GRERISCDFEEAAEPVLIQEGLKN) the chain is on the extracellular side. Residues 301-334 (TGCAIIFLLMYFFGMASSIWWVILTLTWFLAAGL) traverse the membrane as a helical segment. The Cytoplasmic segment spans residues 335–337 (KWG). The helical transmembrane segment at 338 to 366 (HEAIEMHSSYFHIAAWAIPAVKTIVILIM) threads the bilayer. Residues 367–384 (RLVDADELTGLCYVGNQS) are Extracellular-facing. N-linked (GlcNAc...) asparagine glycosylation is present at Asn382. A helical membrane pass occupies residues 385–419 (LDALTGFVVAPLFTYLVIGTLFIAAGLVALFKIRS). At 420-432 (NLQKDGTKTDKLE) the chain is on the cytoplasmic side. The chain crosses the membrane as a helical span at residues 433 to 461 (RLMVKIGVFSVLYTVPATCVIACYFYEIS). The Extracellular portion of the chain corresponds to 462-474 (NWALFRYSADDSN). The helical transmembrane segment at 475–496 (MAVEMLKIFMSLLVGITSGMWI) threads the bilayer. Topologically, residues 497-538 (WSAKTLHTWQKCSNRLVNSGKVKREKRGNGWVKPGKGNETVV) are cytoplasmic. The short motif at 500-505 (KTLHTW) is the Lys-Thr-X-X-X-Trp motif, mediates interaction with the PDZ domain of Dvl family members element. The PDZ-binding signature appears at 536–538 (TVV).

It belongs to the G-protein coupled receptor Fz/Smo family. Interacts with MAGI3 and NDP. Component of a complex, at least composed of TSPAN12, FZD4 and norrin (NDP). Interacts (via FZ domain) with TSKU; TSKU competes with WNT2B for binding to FZD4, inhibiting Wnt signaling and repressing peripheral eye development. Interacts with glypican GPC3. In terms of processing, ubiquitinated by ZNRF3, leading to its degradation by the proteasome.

It localises to the cell membrane. Its function is as follows. Receptor for Wnt proteins. Most of frizzled receptors are coupled to the beta-catenin (CTNNB1) canonical signaling pathway, which leads to the activation of disheveled proteins, inhibition of GSK-3 kinase, nuclear accumulation of beta-catenin (CTNNB1) and activation of Wnt target genes. Plays a critical role in retinal vascularization by acting as a receptor for Wnt proteins and norrin (NDP). In retina, it can be both activated by Wnt protein-binding, but also by a Wnt-independent signaling via binding of norrin (NDP), promoting in both cases beta-catenin (CTNNB1) accumulation and stimulation of LEF/TCF-mediated transcriptional programs. A second signaling pathway involving PKC and calcium fluxes has been seen for some family members, but it is not yet clear if it represents a distinct pathway or if it can be integrated in the canonical pathway, as PKC seems to be required for Wnt-mediated inactivation of GSK-3 kinase. Both pathways seem to involve interactions with G-proteins. May be involved in transduction and intercellular transmission of polarity information during tissue morphogenesis and/or in differentiated tissues. The protein is Frizzled-4 (Fzd4) of Rattus norvegicus (Rat).